Consider the following 345-residue polypeptide: Methylthioribose-1-phosphate isomerase (345 aa).

Substrate-binding positions include 47 to 49 (RGA), R90, and Q199. Catalysis depends on D240, which acts as the Proton donor. 250–251 (NK) contacts substrate.

It belongs to the eIF-2B alpha/beta/delta subunits family. MtnA subfamily.

The enzyme catalyses 5-(methylsulfanyl)-alpha-D-ribose 1-phosphate = 5-(methylsulfanyl)-D-ribulose 1-phosphate. Its pathway is amino-acid biosynthesis; L-methionine biosynthesis via salvage pathway; L-methionine from S-methyl-5-thio-alpha-D-ribose 1-phosphate: step 1/6. In terms of biological role, catalyzes the interconversion of methylthioribose-1-phosphate (MTR-1-P) into methylthioribulose-1-phosphate (MTRu-1-P). This Crocosphaera subtropica (strain ATCC 51142 / BH68) (Cyanothece sp. (strain ATCC 51142)) protein is Methylthioribose-1-phosphate isomerase.